The chain runs to 343 residues: Outer envelope pore protein 37, chloroplastic (343 aa).

Composition is skewed to polar residues over residues M1–L11 and T23–T43. Positions M1–T43 are disordered. A chloroplast-targeting transit peptide spans M1 to S73. Topologically, residues C74 to L76 are cytoplasmic. Residues F77–S86 traverse the membrane as a beta stranded segment. The Chloroplast intermembrane segment spans residues F87–T103. The chain crosses the membrane as a beta stranded span at residues S104–V113. The Cytoplasmic segment spans residues E114–R129. The beta stranded transmembrane segment at L130 to N137 threads the bilayer. At V138 to P154 the chain is on the chloroplast intermembrane side. The beta stranded transmembrane segment at G155 to V164 threads the bilayer. Topologically, residues P165–P169 are cytoplasmic. Residues R170–G178 form a beta stranded membrane-spanning segment. Topologically, residues E179–E219 are chloroplast intermembrane. A beta stranded transmembrane segment spans residues E220–K228. The Cytoplasmic portion of the chain corresponds to D229–D230. The chain crosses the membrane as a beta stranded span at residues A231–L240. P241 is a topological domain (chloroplast intermembrane). Residues S242 to K250 traverse the membrane as a beta stranded segment. Residues R251–D257 are Cytoplasmic-facing. A beta stranded transmembrane segment spans residues K258–S267. The Chloroplast intermembrane portion of the chain corresponds to N268–M269. Residues W270–G279 form a beta stranded membrane-spanning segment. The Cytoplasmic portion of the chain corresponds to K280–A286. Residues G287–W296 form a beta stranded membrane-spanning segment. Over A297–K316 the chain is Chloroplast intermembrane. The chain crosses the membrane as a beta stranded span at residues V317–D326. Topologically, residues D327 to I343 are cytoplasmic.

The protein belongs to the plastid outer envelope porin OEP37 (TC 1.B.47) family. In terms of assembly, forms an hourglass-shaped multimeric complex. As to expression, ubiquitously expressed at low levels. Mostly present in cotyledons, and accumulates in seedlings and embryos.

The protein localises to the plastid. It localises to the chloroplast outer membrane. Functionally, voltage-dependent peptide-sensitive high conductance rectifying cation channel with a strong affinity for TIC32 that is imported into the chloroplast. Conductance is pH-dependent decreasing with decreasing pH values. The chain is Outer envelope pore protein 37, chloroplastic (OEP37) from Arabidopsis thaliana (Mouse-ear cress).